Here is a 583-residue protein sequence, read N- to C-terminus: MKRSMYAGRVRSEHIGTSITLKGWVGRRRDLGGLIFIDLRDREGIMQLVINPEEVAASVMATAESLRSEFVIEVSGVVTAREQANDNLPTGEVELKVQELSVLNTSKTTPFEIKDGIEANDDTRMRYRYLDLRRPEMLENFKLRAKVTHSIRNYLDNLEFIDVETPMLTKSTPEGARDYLVPSRVNQGHFYALPQSPQITKQLLMNAGFDRYYQIVKCFRDEDLRGDRQPEFTQVDLETSFLSDQEIQDIVEGMIAKVMKDTKGLEVSLPFPRMAYDDAMNNYGSDKPDTRFDMLLQDLTEIVKEVDFKVFSEASVVKAIVVKDKADKYSRKNIDKLTEIAKQYGAKGLAWLKYVDNTISGPVAKFLTAIEGRLTEALQLENNDLILFVADSLEVANETLGALRTRIAKELELIDYSKFNFLWVVDWPMFEWSEEEGRYMSAHHPFTLPTAETAHELEGDLAKVRAVAYDIVLNGYELGGGSLRINQKDTQERMFKALGFSAESAQEQFGFLLEAMDYGFPPHGGLAIGLDRFVMLLAGKDNIREVIAFPKNNKASDPMTQAPSLVSEQQLEELSLTVESYEN.

E174 contacts L-aspartate. The aspartate stretch occupies residues 198–201 (QITK). R220 is an L-aspartate binding site. ATP contacts are provided by residues 220–222 (RDE) and Q229. H443 is a binding site for L-aspartate. E477 provides a ligand contact to ATP. R484 is an L-aspartate binding site. 529 to 532 (GLDR) is a binding site for ATP.

This sequence belongs to the class-II aminoacyl-tRNA synthetase family. Type 1 subfamily. Homodimer.

It localises to the cytoplasm. The catalysed reaction is tRNA(Asp) + L-aspartate + ATP = L-aspartyl-tRNA(Asp) + AMP + diphosphate. In terms of biological role, catalyzes the attachment of L-aspartate to tRNA(Asp) in a two-step reaction: L-aspartate is first activated by ATP to form Asp-AMP and then transferred to the acceptor end of tRNA(Asp). The chain is Aspartate--tRNA ligase from Streptococcus agalactiae serotype III (strain NEM316).